A 259-amino-acid polypeptide reads, in one-letter code: MMQKQNMIVVNQKEIAKNIYELVLQGTLVQQMNEPGQFVHIKVAEGIAPLLRRPISICNVDQEKNEFTMLYRAEGQGTKTLATRKQGEMVDVLGPLGHGFPVEEAEAGQTALLVGGGIGVPPLYELSQRLVAKGVRVIHILGFQTKDVVFYEEKFAELGDTYVATVDGTHGTKGFVTDVIDHYGIDFDILYSCGPLAMLRALEGRYKEKKAYISLEERMGCGIGACFACVCHLQEDPSGHSYKKVCSDGPVFPIGEVVL.

In terms of domain architecture, FAD-binding FR-type spans 2-102 (MQKQNMIVVN…LGPLGHGFPV (101 aa)). Residues 53 to 56 (RPIS), 70 to 72 (LYR), and 77 to 78 (GT) each bind FAD. Positions 221, 226, 229, and 246 each coordinate [2Fe-2S] cluster.

The protein belongs to the PyrK family. As to quaternary structure, heterotetramer of 2 PyrK and 2 PyrD type B subunits. [2Fe-2S] cluster serves as cofactor. Requires FAD as cofactor.

Its pathway is pyrimidine metabolism; UMP biosynthesis via de novo pathway; orotate from (S)-dihydroorotate (NAD(+) route): step 1/1. Responsible for channeling the electrons from the oxidation of dihydroorotate from the FMN redox center in the PyrD type B subunit to the ultimate electron acceptor NAD(+). In Bacillus cereus (strain ZK / E33L), this protein is Dihydroorotate dehydrogenase B (NAD(+)), electron transfer subunit.